Consider the following 157-residue polypeptide: Transcription elongation factor GreA (157 aa).

Belongs to the GreA/GreB family.

Necessary for efficient RNA polymerase transcription elongation past template-encoded arresting sites. The arresting sites in DNA have the property of trapping a certain fraction of elongating RNA polymerases that pass through, resulting in locked ternary complexes. Cleavage of the nascent transcript by cleavage factors such as GreA or GreB allows the resumption of elongation from the new 3'terminus. GreA releases sequences of 2 to 3 nucleotides. The protein is Transcription elongation factor GreA of Bartonella henselae (strain ATCC 49882 / DSM 28221 / CCUG 30454 / Houston 1) (Rochalimaea henselae).